The following is a 354-amino-acid chain: Uroporphyrinogen decarboxylase (354 aa).

Residues 27–31 (RQAGR), Asp-77, Tyr-154, Ser-209, and His-327 each bind substrate.

The protein belongs to the uroporphyrinogen decarboxylase family. In terms of assembly, homodimer.

Its subcellular location is the cytoplasm. The catalysed reaction is uroporphyrinogen III + 4 H(+) = coproporphyrinogen III + 4 CO2. It functions in the pathway porphyrin-containing compound metabolism; protoporphyrin-IX biosynthesis; coproporphyrinogen-III from 5-aminolevulinate: step 4/4. Its function is as follows. Catalyzes the decarboxylation of four acetate groups of uroporphyrinogen-III to yield coproporphyrinogen-III. This is Uroporphyrinogen decarboxylase from Shewanella baltica (strain OS185).